A 279-amino-acid polypeptide reads, in one-letter code: Probable endonuclease 4 (279 aa).

Residues H69, H109, E145, D179, H182, H216, D229, H231, and E261 each coordinate Zn(2+).

It belongs to the AP endonuclease 2 family. It depends on Zn(2+) as a cofactor.

It carries out the reaction Endonucleolytic cleavage to 5'-phosphooligonucleotide end-products.. Its function is as follows. Endonuclease IV plays a role in DNA repair. It cleaves phosphodiester bonds at apurinic or apyrimidinic (AP) sites, generating a 3'-hydroxyl group and a 5'-terminal sugar phosphate. The polypeptide is Probable endonuclease 4 (Buchnera aphidicola subsp. Schizaphis graminum (strain Sg)).